A 232-amino-acid chain; its full sequence is 5'-methylthioadenosine/S-adenosylhomocysteine nucleosidase (232 aa).

Glutamate 12 serves as the catalytic Proton acceptor. Residues glycine 78, methionine 153, and 174–175 (ME) contribute to the substrate site. The active-site Proton donor is aspartate 198.

Belongs to the PNP/UDP phosphorylase family. MtnN subfamily.

The enzyme catalyses S-adenosyl-L-homocysteine + H2O = S-(5-deoxy-D-ribos-5-yl)-L-homocysteine + adenine. It carries out the reaction S-methyl-5'-thioadenosine + H2O = 5-(methylsulfanyl)-D-ribose + adenine. The catalysed reaction is 5'-deoxyadenosine + H2O = 5-deoxy-D-ribose + adenine. Its pathway is amino-acid biosynthesis; L-methionine biosynthesis via salvage pathway; S-methyl-5-thio-alpha-D-ribose 1-phosphate from S-methyl-5'-thioadenosine (hydrolase route): step 1/2. Functionally, catalyzes the irreversible cleavage of the glycosidic bond in both 5'-methylthioadenosine (MTA) and S-adenosylhomocysteine (SAH/AdoHcy) to adenine and the corresponding thioribose, 5'-methylthioribose and S-ribosylhomocysteine, respectively. Also cleaves 5'-deoxyadenosine, a toxic by-product of radical S-adenosylmethionine (SAM) enzymes, into 5-deoxyribose and adenine. This Geobacillus sp. (strain WCH70) protein is 5'-methylthioadenosine/S-adenosylhomocysteine nucleosidase.